The following is a 547-amino-acid chain: Sodium-coupled neutral amino acid transporter 4 (547 aa).

Positions 1–26 are disordered; it reads MDPMELRNVNIEPDDESSSGESVPDS. The Extracellular portion of the chain corresponds to 1 to 104; it reads MDPMELRNVN…GLSYAMANTG (104 aa). The residue at position 49 (serine 49) is a Phosphoserine. The helical transmembrane segment at 105 to 125 threads the bilayer; it reads IILFIIMLLAVAILSLYSVHL. Over 126-151 the chain is Cytoplasmic; sequence LLKTAKEGGSLIYEKLGEKAFGWPGK. A helical membrane pass occupies residues 152–172; the sequence is IGAFISITMQNIGAMSSYLFI. The Extracellular segment spans residues 173–195; it reads IKYELPEVIRAFMGLEENTGEWY. The helical transmembrane segment at 196–216 threads the bilayer; sequence PNGNYLIVFVSLGIILPLSLL. Residues 217–220 are Cytoplasmic-facing; that stretch reads KNLG. A helical membrane pass occupies residues 221 to 241; the sequence is YLGYTSGFSLTCMVFFVSVVI. The Extracellular portion of the chain corresponds to 242 to 332; it reads YKKFQIPCPL…PKYFVFNSRT (91 aa). Cysteine 249 and cysteine 321 are joined by a disulfide. Asparagine 260, asparagine 264, and asparagine 276 each carry an N-linked (GlcNAc...) asparagine glycan. A helical transmembrane segment spans residues 333–353; sequence AYAIPILAFAFVCHPEVLPIY. Over 354–369 the chain is Cytoplasmic; sequence SELKDRSRRKMQTVSN. The helical transmembrane segment at 370–390 threads the bilayer; it reads ISITGMLVMYLLAALFGYLTF. The Extracellular portion of the chain corresponds to 391–411; sequence YGEVEDELLHAYSKVYTFDIP. A helical transmembrane segment spans residues 412 to 432; that stretch reads LLMVRLAVLVAVTLTVPIVLF. Residues 433–453 are Cytoplasmic-facing; it reads PIRTSVTTLLFPKRPFSWIRH. The chain crosses the membrane as a helical span at residues 454–474; that stretch reads FLIAAVLIALNNVLVILVPTI. At 475-476 the chain is on the extracellular side; that stretch reads KY. The helical transmembrane segment at 477–497 threads the bilayer; the sequence is IFGFIGASSATMLIFILPAVF. Over 498–514 the chain is Cytoplasmic; that stretch reads YLKLVKKESFRSPQKVG. The chain crosses the membrane as a helical span at residues 515 to 535; sequence ALIFLVVGIIFMIGSMALIII. At 536-547 the chain is on the extracellular side; that stretch reads DWIYDPPNSKHH.

It belongs to the amino acid/polyamine transporter 2 family. The disulfide bond plays an important role in substrate transport, but has no effect on trafficking to the cell surface.

It is found in the cell membrane. Its subcellular location is the cell projection. It localises to the microvillus membrane. It catalyses the reaction L-methionine(in) + Na(+)(in) = L-methionine(out) + Na(+)(out). The catalysed reaction is L-asparagine(in) + Na(+)(in) = L-asparagine(out) + Na(+)(out). The enzyme catalyses L-threonine(in) + Na(+)(in) = L-threonine(out) + Na(+)(out). It carries out the reaction L-serine(in) + Na(+)(in) = L-serine(out) + Na(+)(out). It catalyses the reaction glycine(in) + Na(+)(in) = glycine(out) + Na(+)(out). The catalysed reaction is L-alanine(in) + Na(+)(in) = L-alanine(out) + Na(+)(out). The enzyme catalyses L-glutamine(in) + Na(+)(in) = L-glutamine(out) + Na(+)(out). It carries out the reaction L-histidine(in) + Na(+)(in) = L-histidine(out) + Na(+)(out). It catalyses the reaction L-cysteine(in) + Na(+)(in) = L-cysteine(out) + Na(+)(out). The catalysed reaction is L-proline(in) + Na(+)(in) = L-proline(out) + Na(+)(out). Functionally, symporter that cotransports neutral amino acids and sodium ions from the extraccellular to the intracellular side of the cell membrane. The transport is electrogenic, pH dependent and partially tolerates substitution of Na(+) by Li(+). Preferentially transports smaller amino acids, such as glycine, L-alanine, L-serine, L-asparagine and L-threonine, followed by L-cysteine, L-histidine, L-proline and L-glutamine and L-methionine. This is Sodium-coupled neutral amino acid transporter 4 from Pongo abelii (Sumatran orangutan).